The primary structure comprises 378 residues: Probable endopolygalacturonase E (378 aa).

The signal sequence occupies residues 1–19; that stretch reads MVTSSSVIVLTLWAALVSA. A propeptide spanning residues 20–38 is cleaved from the precursor; the sequence is SPVADPLVTPAPKLEDLEK. A disulfide bridge links Cys-43 with Cys-61. 3 PbH1 repeats span residues 103 to 125, 174 to 204, and 205 to 226; these read GPLV…YLNG, STYL…DIGD, and STYI…AVNS. Asp-219 acts as the Proton donor in catalysis. Cys-221 and Cys-237 are joined by a disulfide. His-241 is an active-site residue. PbH1 repeat units follow at residues 256–277, 285–307, and 317–345; these read VKNV…RIKT, VSEV…VVEQ, and TDGI…YIVC. Asn-258 carries an N-linked (GlcNAc...) asparagine glycan. Cystine bridges form between Cys-345–Cys-350 and Cys-369–Cys-378.

It belongs to the glycosyl hydrolase 28 family.

The protein localises to the secreted. The catalysed reaction is (1,4-alpha-D-galacturonosyl)n+m + H2O = (1,4-alpha-D-galacturonosyl)n + (1,4-alpha-D-galacturonosyl)m.. Its function is as follows. Involved in maceration and soft-rotting of plant tissue. Hydrolyzes the 1,4-alpha glycosidic bonds of de-esterified pectate in the smooth region of the plant cell wall. This Aspergillus niger (strain ATCC MYA-4892 / CBS 513.88 / FGSC A1513) protein is Probable endopolygalacturonase E (pgaE).